The primary structure comprises 635 residues: GTPase-GDP dissociation stimulator vimar (635 aa).

ARM repeat units follow at residues 72–118 (KSEV…NICY), 346–391 (TDSH…NLVI), 392–432 (PKPN…MTVD), and 510–550 (RSSL…ILSV).

Interacts with Miro.

It is found in the endoplasmic reticulum. Its subcellular location is the mitochondrion. The protein localises to the cytoplasm. The protein resides in the cytosol. In terms of biological role, probably acts as a GEF (guanine nucleotide exchange factor) for the Rho family of small GTP-binding proteins (G proteins) that stimulates the dissociation of GDP to enable subsequent binding of GTP. May also chaperone the processing and/or trafficking of small GTPases independently of GEF activity. By interacting with Miro, promotes mitochondrial fission in response to high calcium concentrations. This Drosophila melanogaster (Fruit fly) protein is GTPase-GDP dissociation stimulator vimar.